The sequence spans 183 residues: Copper transporter 4 (183 aa).

Residues 1–21 form a disordered region; it reads MAMPMPMPPPGPGGDAPPAPT. Helical transmembrane passes span 56 to 76 and 115 to 135; these read VGMY…AEAL and LAYL…LAAV.

The protein belongs to the copper transporter (Ctr) (TC 1.A.56) family. SLC31A subfamily.

It is found in the membrane. Involved in the transport of copper. In Oryza sativa subsp. japonica (Rice), this protein is Copper transporter 4 (COPT4).